Consider the following 2139-residue polypeptide: U5 small nuclear ribonucleoprotein 200 kDa helicase (2139 aa).

2 positions are modified to phosphoserine: serine 17 and serine 26. The disordered stretch occupies residues 39-80 (EVLSLVGKLEGTRMGDKAQRTKPQMQEERRAKRRKRDEDRHD). A Glycyl lysine isopeptide (Lys-Gly) (interchain with G-Cter in SUMO2) cross-link involves residue lysine 46. Residues 48-80 (EGTRMGDKAQRTKPQMQEERRAKRRKRDEDRHD) show a composition bias toward basic and acidic residues. Residues 54–84 (DKAQRTKPQMQEERRAKRRKRDEDRHDINKM) are a coiled coil. Serine 225 carries the post-translational modification Phosphoserine. The residue at position 389 (threonine 389) is a Phosphothreonine. The segment at 395–2132 (DLDQGGEALA…YKFSVDVKEA (1738 aa)) is interaction with C9orf78 and WBP4. The Helicase ATP-binding 1 domain occupies 490–673 (RAALETDENL…FLRVDPAKGL (184 aa)). 503–510 (APTGAGKT) serves as a coordination point for ATP. A DEAH box motif is present at residues 615 to 618 (DEIH). The Helicase C-terminal 1 domain maps to 684 to 921 (PLEQTYVGIT…NAKDAVNWLG (238 aa)). At tyrosine 709 the chain carries Phosphotyrosine. Lysine 944 is covalently cross-linked (Glycyl lysine isopeptide (Lys-Gly) (interchain with G-Cter in SUMO)). Residue lysine 971 is modified to N6-acetyllysine; alternate. Lysine 971 is covalently cross-linked (Glycyl lysine isopeptide (Lys-Gly) (interchain with G-Cter in SUMO); alternate). The SEC63 1 domain occupies 982–1289 (TELGRIASHY…SCETQLPVSF (308 aa)). Glycyl lysine isopeptide (Lys-Gly) (interchain with G-Cter in SUMO) cross-links involve residues lysine 1071 and lysine 1199. The segment at 1285–2139 (LPVSFRHLIL…KEAETDSDSD (855 aa)) is interaction with TSSC4. One can recognise a Helicase ATP-binding 2 domain in the interval 1340 to 1515 (NTVYNSDDNV…WLGCSATSTF (176 aa)). Residue 1353–1360 (APTGSGKT) participates in ATP binding. Residue threonine 1431 is modified to Phosphothreonine. The DEAH box signature appears at 1457 to 1460 (DEVH). The 209-residue stretch at 1548–1756 (PVYHAITKHS…TIENKQDAVD (209 aa)) folds into the Helicase C-terminal 2 domain. Threonine 1768 is modified (phosphothreonine). An SEC63 2 domain is found at 1815–2127 (PLNLGMIAAY…GCDQEYKFSV (313 aa)). Position 2005 is a phosphoserine (serine 2005). Lysine 2094 participates in a covalent cross-link: Glycyl lysine isopeptide (Lys-Gly) (interchain with G-Cter in SUMO). At threonine 2134 the chain carries Phosphothreonine. Serine 2136 and serine 2138 each carry phosphoserine.

It belongs to the helicase family. SKI2 subfamily. Component of a core complex containing at least PRPF8, SNRNP200, EFTUD2 and SNRNP40. Component of the U5 snRNP and U4/U6-U5 tri-snRNP complexes, building blocks of the spliceosome. Component of the U4/U6-U5 tri-snRNP complex composed of the U4, U6 and U5 snRNAs and at least PRPF3, PRPF4, PRPF6, PRPF8, PRPF31, SNRNP200, TXNL4A, SNRNP40, DDX23, CD2BP2, PPIH, SNU13, EFTUD2, SART1 and USP39. Component of precatalytic, catalytic and postcatalytic spliceosomal complexes. Component of the minor spliceosome, which splices U12-type introns. Interacts with C9orf78; the interaction is direct and mutually exclusive with its interaction with WBP4. Interacts with WBP4; the interaction is mutually exclusive with its interaction with C9orf78. Interacts with PRPF8. Interacts with TSSC4; the interaction is direct, excludes recruitment of C9ORF78 and WBP4 to SNRNP200 and negatively regulates its RNA helicase activity.

Its subcellular location is the nucleus. It catalyses the reaction ATP + H2O = ADP + phosphate + H(+). Functionally, catalyzes the ATP-dependent unwinding of U4/U6 RNA duplices, an essential step in the assembly of a catalytically active spliceosome. Plays a role in pre-mRNA splicing as core component of precatalytic, catalytic and postcatalytic spliceosomal complexes. As a component of the minor spliceosome, involved in the splicing of U12-type introns in pre-mRNAs. Involved in spliceosome assembly, activation and disassembly. Mediates changes in the dynamic network of RNA-RNA interactions in the spliceosome. The polypeptide is U5 small nuclear ribonucleoprotein 200 kDa helicase (Snrnp200) (Rattus norvegicus (Rat)).